Here is a 437-residue protein sequence, read N- to C-terminus: MNAYQNKNITIIGLGKTGLSCVDYLLSQQANIRVIDTRKKPTGIDKLPQNIPLHTGSLNQEWLLESDMIVISPGLAVKTPEIQTALKAGVEVIGDIELFCRAATKPIVGITGSNGKSTVTTLVYEMAKAAGVKVGMGGNIGIPALSLLNEDCELYVLELSSFQLETTYSLKAAAATVLNVTEDHMDRYMDLEDYRQAKLRIYHNAEVGVLNNEDKLTFGEGENQARQTVSFAENSADYWLKTENGKQYLMVKDEVILPCEEATLVGRHNYMNILAATALAQAVGINLDAIRTALRHFKGLDHRFQLAHQANGVRWINDSKATNVGSTVAALSGLYVEGKLHLLLGGDGKGADFSELAELINQPHIICYCFGRDGALLAKLSSQSYLFETMEQAIAFLRPTLQSGDMVLLSPACASLDQFASFEKRGEEFTRLAQCLA.

An ATP-binding site is contributed by 112–118; it reads GSNGKST.

The protein belongs to the MurCDEF family.

Its subcellular location is the cytoplasm. It carries out the reaction UDP-N-acetyl-alpha-D-muramoyl-L-alanine + D-glutamate + ATP = UDP-N-acetyl-alpha-D-muramoyl-L-alanyl-D-glutamate + ADP + phosphate + H(+). It participates in cell wall biogenesis; peptidoglycan biosynthesis. Functionally, cell wall formation. Catalyzes the addition of glutamate to the nucleotide precursor UDP-N-acetylmuramoyl-L-alanine (UMA). The sequence is that of UDP-N-acetylmuramoylalanine--D-glutamate ligase from Haemophilus influenzae (strain PittEE).